The primary structure comprises 339 residues: Protein-glutamate methylesterase/protein-glutamine glutaminase 3 (339 aa).

One can recognise a Response regulatory domain in the interval 2–119; sequence NIGIVNDLPL…GLSTDASPQA (118 aa). The residue at position 53 (D53) is a 4-aspartylphosphate. Positions 141–336 constitute a CheB-type methylesterase domain; sequence PGPAPTRGQP…PQLIARIALT (196 aa). Residues S158, H185, and D278 contribute to the active site.

The protein belongs to the CheB family. In terms of processing, phosphorylated by CheA. Phosphorylation of the N-terminal regulatory domain activates the methylesterase activity.

It is found in the cytoplasm. The catalysed reaction is [protein]-L-glutamate 5-O-methyl ester + H2O = L-glutamyl-[protein] + methanol + H(+). The enzyme catalyses L-glutaminyl-[protein] + H2O = L-glutamyl-[protein] + NH4(+). Involved in chemotaxis. Part of a chemotaxis signal transduction system that modulates chemotaxis in response to various stimuli. Catalyzes the demethylation of specific methylglutamate residues introduced into the chemoreceptors (methyl-accepting chemotaxis proteins or MCP) by CheR. Also mediates the irreversible deamidation of specific glutamine residues to glutamic acid. The protein is Protein-glutamate methylesterase/protein-glutamine glutaminase 3 of Burkholderia orbicola (strain AU 1054).